A 360-amino-acid polypeptide reads, in one-letter code: MSTLLSEVESIDTLPYVKDTTPTGSDSSSFNKLLAPSIEDVDANPEELRTLRGQGRYFGITDYDSNGAIMEAEPKCNNCSQRGHLKRNCPHVICTYCGFMDDHYSQHCPKAIICTNCNANGHYKSQCPHKWKKVFCTLCNSKRHSRERCPSIWRSYLLKTKDANQGDFDFQTVFCYNCGNAGHFGDDCAERRSSRVPNTDGSAFCGDNLATKFKQHYFNQLKDYKREASQRQHFDNEHEFNLLDYEYNDDAYDLPGSRTYRDKMKWKGKVQSTRNKNSSNNRYESSNNRKKKSPFSAQNYKVTKNKRVQTHPLDFPRSSQNNRTNDYSSQFSYNRDDFPKGPKNKRGRSSSNKSQRNGRY.

Ser37 is subject to Phosphoserine. 4 consecutive CCHC-type zinc fingers follow at residues 74–91 (PKCN…NCPH), 112–129 (IICT…QCPH), 134–151 (VFCT…RCPS), and 173–190 (VFCY…DCAE). The disordered stretch occupies residues 265–360 (KWKGKVQSTR…SNKSQRNGRY (96 aa)). Residues 274–286 (RNKNSSNNRYESS) are compositionally biased toward low complexity. Over residues 317–333 (RSSQNNRTNDYSSQFSY) the composition is skewed to polar residues. A compositionally biased stretch (low complexity) spans 349–360 (SSSNKSQRNGRY).

The protein belongs to the AIR1 family. As to quaternary structure, component of the TRAMP complex (also called TRF4 complex) composed of at least HUL4, MTR4, PAP2/TFR4 and either AIR1 or AIR2. Component of the TRAMP5 complex composed of at least AIR1, MTR4 and TRF5. Interacts with HMT1 and NPL3. The interaction with NPL3 requires the presence of HMT1.

It localises to the cytoplasm. The protein localises to the nucleus. Its function is as follows. Component of the TRAMP (TRF4) and TRAMP5 complexes which have a poly(A) RNA polymerase activity and are involved in a post-transcriptional quality control mechanism limiting inappropriate expression of genetic information. Polyadenylation is required for the degradative activity of the exosome on several of its nuclear RNA substrates like cryptic transcripts generated by RNA polymerase II and III, or hypomethylated pre-tRNAi-Met. Both complexes polyadenylate RNA processing and degradation intermediates of snRNAs, snoRNAs and mRNAs that accumulate in strains lacking a functional exosome. AIR1 also inhibits the methylation of NPL3 mediated by HMT1 through its interaction with HMT1. This is Protein AIR1 (AIR1) from Saccharomyces cerevisiae (strain ATCC 204508 / S288c) (Baker's yeast).